Here is a 93-residue protein sequence, read N- to C-terminus: Small ribosomal subunit protein uS19 (93 aa).

Belongs to the universal ribosomal protein uS19 family.

Protein S19 forms a complex with S13 that binds strongly to the 16S ribosomal RNA. The chain is Small ribosomal subunit protein uS19 from Geobacter sulfurreducens (strain ATCC 51573 / DSM 12127 / PCA).